Consider the following 378-residue polypeptide: Putative F-box protein At3g24580 (378 aa).

One can recognise an F-box domain in the interval 1 to 47 (MTKMSNLPNDLAEEVLSRVSLTSLRNVRLTCKDWNTLSKGESFAKNH).

The polypeptide is Putative F-box protein At3g24580 (Arabidopsis thaliana (Mouse-ear cress)).